A 249-amino-acid polypeptide reads, in one-letter code: 4-hydroxy-tetrahydrodipicolinate reductase (249 aa).

NAD(+) contacts are provided by residues aspartate 32, glycine 74 to threonine 76, and serine 99 to phenylalanine 102. Residue histidine 134 is the Proton donor/acceptor of the active site. Position 135 (histidine 135) interacts with (S)-2,3,4,5-tetrahydrodipicolinate. Residue lysine 138 is the Proton donor of the active site. Glycine 144–threonine 145 contributes to the (S)-2,3,4,5-tetrahydrodipicolinate binding site.

The protein belongs to the DapB family.

The protein resides in the cytoplasm. It carries out the reaction (S)-2,3,4,5-tetrahydrodipicolinate + NAD(+) + H2O = (2S,4S)-4-hydroxy-2,3,4,5-tetrahydrodipicolinate + NADH + H(+). It catalyses the reaction (S)-2,3,4,5-tetrahydrodipicolinate + NADP(+) + H2O = (2S,4S)-4-hydroxy-2,3,4,5-tetrahydrodipicolinate + NADPH + H(+). It participates in amino-acid biosynthesis; L-lysine biosynthesis via DAP pathway; (S)-tetrahydrodipicolinate from L-aspartate: step 4/4. In terms of biological role, catalyzes the conversion of 4-hydroxy-tetrahydrodipicolinate (HTPA) to tetrahydrodipicolinate. In Chlorobaculum parvum (strain DSM 263 / NCIMB 8327) (Chlorobium vibrioforme subsp. thiosulfatophilum), this protein is 4-hydroxy-tetrahydrodipicolinate reductase.